A 295-amino-acid chain; its full sequence is 4-hydroxy-tetrahydrodipicolinate synthase (295 aa).

Threonine 47 provides a ligand contact to pyruvate. Residue tyrosine 135 is the Proton donor/acceptor of the active site. Lysine 163 functions as the Schiff-base intermediate with substrate in the catalytic mechanism. Isoleucine 206 contacts pyruvate.

In terms of assembly, homodimer. In fact, exists in a monomer-dimer equilibrium in solution, shifted in favor of the dimer in presence of the substrate pyruvate; the monomer has significantly reduced activity compared with the dimer.

Its subcellular location is the cytoplasm. The catalysed reaction is L-aspartate 4-semialdehyde + pyruvate = (2S,4S)-4-hydroxy-2,3,4,5-tetrahydrodipicolinate + H2O + H(+). It participates in amino-acid biosynthesis; L-lysine biosynthesis via DAP pathway; (S)-tetrahydrodipicolinate from L-aspartate: step 3/4. Its activity is regulated as follows. Is insensitive to lysine-feedback inhibition. Shows ASA substrate inhibition. Functionally, catalyzes the condensation of (S)-aspartate-beta-semialdehyde [(S)-ASA] and pyruvate to 4-hydroxy-tetrahydrodipicolinate (HTPA). This is 4-hydroxy-tetrahydrodipicolinate synthase from Staphylococcus aureus (strain MRSA252).